Here is a 486-residue protein sequence, read N- to C-terminus: Elastin-binding protein EbpS (486 aa).

Positions 1-40 (MSNNFKDDFEKNRQSIDTNSHQDHTEDVEKDQSELEHQDT) are enriched in basic and acidic residues. Residues 1–314 (MSNNFKDDFE…NHDRDKERKK (314 aa)) form a disordered region. The Extracellular segment spans residues 2–204 (SNNFKDDFEK…ESKDHHSGKK (203 aa)). The tract at residues 14–34 (QSIDTNSHQDHTEDVEKDQSE) is elastin-binding. The span at 64–85 (TNHNKQVHNESQTSEDNVQNEA) shows a compositional bias: polar residues. 3 stretches are compositionally biased toward basic and acidic residues: residues 103-118 (EPSHQDSTPQHEEEYY), 126-160 (DKSHPEPIEDNDKHETIKEAENNTEHSTVSDKSEA), and 180-199 (SKDKHDDVTVKQDKDESKDH). Composition is skewed to low complexity over residues 204–225 (KGAAIGAGTAGVAGAAGAMGVS) and 233–246 (DAQNKSNSDKSNNS). A helical membrane pass occupies residues 205-225 (GAAIGAGTAGVAGAAGAMGVS). At 226-319 (KAKKHSNDAQ…KERKKGGMAK (94 aa)) the chain is on the cytoplasmic side. Residues 247-259 (TEDKVSQDKSKDH) show a composition bias toward basic and acidic residues. Positions 278 to 297 (GAASKSASAASKPHASNNAS) are enriched in low complexity. Over residues 299 to 314 (NHDEHDNHDRDKERKK) the composition is skewed to basic and acidic residues. A helical transmembrane segment spans residues 320-340 (VLLPLIAAVLIIGALAIFGGM). Residues 341-486 (ALNNHNNGTK…IRNGQQIVIP (146 aa)) lie on the Extracellular side of the membrane. The interval 351-440 (ENKIANTNKN…QRQGGGQRHT (90 aa)) is disordered. Positions 361 to 398 (NADESKDKDTSKDASKDKSKSTDSDKSKEDQDKATKDE) are enriched in basic and acidic residues. The span at 403–431 (QNNANQANNQAQNNQNQQQANQNQQQQQQ) shows a compositional bias: low complexity. Residues 437-485 (QRHTVNGQENLYRIAIQYYGSGSPENVEKIRRANGLSGNNIRNGQQIVI) enclose the LysM domain.

It is found in the cell membrane. Functionally, promotes binding of soluble elastin peptides and tropoelastin to S.aureus cells although it is not able to promote bacterial adherence to immobilized elastin and, therefore, is not a microbial surface component recognizing adhesive matrix molecule (MSCRAMM). The polypeptide is Elastin-binding protein EbpS (ebpS) (Staphylococcus aureus (strain MSSA476)).